Reading from the N-terminus, the 100-residue chain is Small ribosomal subunit protein uS14c (100 aa).

Belongs to the universal ribosomal protein uS14 family. Part of the 30S ribosomal subunit.

The protein resides in the plastid. Its subcellular location is the chloroplast. Its function is as follows. Binds 16S rRNA, required for the assembly of 30S particles. The protein is Small ribosomal subunit protein uS14c of Lepidium virginicum (Virginia pepperweed).